Consider the following 340-residue polypeptide: Dihydroorotate dehydrogenase (quinone) (340 aa).

FMN is bound by residues 61-65 (AGLDK) and Thr-85. A substrate-binding site is contributed by Lys-65. 110-114 (NRMGF) provides a ligand contact to substrate. FMN is bound by residues Asn-138 and Asn-171. Residue Asn-171 coordinates substrate. Ser-174 acts as the Nucleophile in catalysis. Asn-176 contacts substrate. FMN contacts are provided by Lys-216 and Thr-244. 245 to 246 (NT) is a binding site for substrate. Residues Gly-267, Gly-296, and 317 to 318 (YS) contribute to the FMN site.

The protein belongs to the dihydroorotate dehydrogenase family. Type 2 subfamily. As to quaternary structure, monomer. Requires FMN as cofactor.

It is found in the cell membrane. The enzyme catalyses (S)-dihydroorotate + a quinone = orotate + a quinol. Its pathway is pyrimidine metabolism; UMP biosynthesis via de novo pathway; orotate from (S)-dihydroorotate (quinone route): step 1/1. In terms of biological role, catalyzes the conversion of dihydroorotate to orotate with quinone as electron acceptor. The sequence is that of Dihydroorotate dehydrogenase (quinone) from Pseudomonas putida (strain ATCC 47054 / DSM 6125 / CFBP 8728 / NCIMB 11950 / KT2440).